The primary structure comprises 345 residues: S-adenosylmethionine:tRNA ribosyltransferase-isomerase (345 aa).

The protein belongs to the QueA family. In terms of assembly, monomer.

It localises to the cytoplasm. The catalysed reaction is 7-aminomethyl-7-carbaguanosine(34) in tRNA + S-adenosyl-L-methionine = epoxyqueuosine(34) in tRNA + adenine + L-methionine + 2 H(+). Its pathway is tRNA modification; tRNA-queuosine biosynthesis. In terms of biological role, transfers and isomerizes the ribose moiety from AdoMet to the 7-aminomethyl group of 7-deazaguanine (preQ1-tRNA) to give epoxyqueuosine (oQ-tRNA). The chain is S-adenosylmethionine:tRNA ribosyltransferase-isomerase from Anaeromyxobacter dehalogenans (strain 2CP-C).